A 399-amino-acid polypeptide reads, in one-letter code: Phosphoglycerate kinase (399 aa).

Residues 21-23 (DFN), R36, 59-62 (HLGR), R120, and R158 contribute to the substrate site. ATP is bound by residues K209, G297, E328, and 355–358 (GGDS).

This sequence belongs to the phosphoglycerate kinase family. As to quaternary structure, monomer.

It is found in the cytoplasm. It catalyses the reaction (2R)-3-phosphoglycerate + ATP = (2R)-3-phospho-glyceroyl phosphate + ADP. It participates in carbohydrate degradation; glycolysis; pyruvate from D-glyceraldehyde 3-phosphate: step 2/5. This chain is Phosphoglycerate kinase, found in Streptococcus thermophilus (strain ATCC BAA-491 / LMD-9).